A 239-amino-acid chain; its full sequence is Pyridoxine 5'-phosphate synthase (239 aa).

Asn7 contributes to the 3-amino-2-oxopropyl phosphate binding site. 9-10 contacts 1-deoxy-D-xylulose 5-phosphate; the sequence is DH. Position 18 (Arg18) interacts with 3-amino-2-oxopropyl phosphate. His43 functions as the Proton acceptor in the catalytic mechanism. The 1-deoxy-D-xylulose 5-phosphate site is built by Arg45 and His50. Catalysis depends on Glu70, which acts as the Proton acceptor. Thr100 contributes to the 1-deoxy-D-xylulose 5-phosphate binding site. His191 (proton donor) is an active-site residue. Residues Gly192 and 213–214 each bind 3-amino-2-oxopropyl phosphate; that span reads GH.

The protein belongs to the PNP synthase family. Homooctamer; tetramer of dimers.

The protein resides in the cytoplasm. The enzyme catalyses 3-amino-2-oxopropyl phosphate + 1-deoxy-D-xylulose 5-phosphate = pyridoxine 5'-phosphate + phosphate + 2 H2O + H(+). It functions in the pathway cofactor biosynthesis; pyridoxine 5'-phosphate biosynthesis; pyridoxine 5'-phosphate from D-erythrose 4-phosphate: step 5/5. Catalyzes the complicated ring closure reaction between the two acyclic compounds 1-deoxy-D-xylulose-5-phosphate (DXP) and 3-amino-2-oxopropyl phosphate (1-amino-acetone-3-phosphate or AAP) to form pyridoxine 5'-phosphate (PNP) and inorganic phosphate. This Geobacter sulfurreducens (strain ATCC 51573 / DSM 12127 / PCA) protein is Pyridoxine 5'-phosphate synthase.